Reading from the N-terminus, the 81-residue chain is Photosystem I iron-sulfur center (81 aa).

4Fe-4S ferredoxin-type domains lie at 2–31 and 39–68; these read AHSV…MIPW and IASA…VRVY. 8 residues coordinate [4Fe-4S] cluster: C11, C14, C17, C21, C48, C51, C54, and C58.

As to quaternary structure, the eukaryotic PSI reaction center is composed of at least 11 subunits. Requires [4Fe-4S] cluster as cofactor.

It is found in the plastid. Its subcellular location is the chloroplast thylakoid membrane. The enzyme catalyses reduced [plastocyanin] + hnu + oxidized [2Fe-2S]-[ferredoxin] = oxidized [plastocyanin] + reduced [2Fe-2S]-[ferredoxin]. Functionally, apoprotein for the two 4Fe-4S centers FA and FB of photosystem I (PSI); essential for photochemical activity. FB is the terminal electron acceptor of PSI, donating electrons to ferredoxin. The C-terminus interacts with PsaA/B/D and helps assemble the protein into the PSI complex. Required for binding of PsaD and PsaE to PSI. PSI is a plastocyanin-ferredoxin oxidoreductase, converting photonic excitation into a charge separation, which transfers an electron from the donor P700 chlorophyll pair to the spectroscopically characterized acceptors A0, A1, FX, FA and FB in turn. This Pinus thunbergii (Japanese black pine) protein is Photosystem I iron-sulfur center.